A 2155-amino-acid polypeptide reads, in one-letter code: Alpha-tectorin (2155 aa).

Positions 1-24 (MNYSSLLRIWVSFIFALVRHQAQP) are cleaved as a signal peptide. Residues asparagine 34, asparagine 187, asparagine 215, asparagine 278, asparagine 455, asparagine 506, asparagine 528, and asparagine 560 are each glycosylated (N-linked (GlcNAc...) asparagine). The NIDO domain occupies 98-252 (PFWADVHNGI…GRWAFKVDGK (155 aa)). A VWFC domain is found at 260-314 (CTSRGQFLRRGEVFWDDLNCTIKCRCLDFNNEIYCQEASCSPYEVCEPKGRFFYC). The 181-residue stretch at 320-500 (STCVVFGEPH…RVYHADWKCG (181 aa)) folds into the VWFD 1 domain. 2 disulfide bridges follow: cysteine 322–cysteine 461 and cysteine 344–cysteine 499. A TIL 1 domain is found at 597–650 (CPSFSHYSVCTSSCPDTCSDLTASQNCATPCTEGCECNEGFVLSTSQCVPLHKC). 9 N-linked (GlcNAc...) asparagine glycosylation sites follow: asparagine 670, asparagine 687, asparagine 813, asparagine 843, asparagine 855, asparagine 898, asparagine 920, asparagine 931, and asparagine 949. In terms of domain architecture, VWFD 2 spans 711-886 (TVCLLSQNQV…SWTTFEEICN (176 aa)). Cysteine 713 and cysteine 849 are disulfide-bonded. One can recognise a TIL 2 domain in the interval 984–1036 (CPENSHFEECMTCTETCETLALGPICVDSCSEGCQCDEGYALQGSQCVPRSEC). Residues asparagine 1048, asparagine 1064, asparagine 1235, and asparagine 1364 are each glycosylated (N-linked (GlcNAc...) asparagine). A VWFD 3 domain is found at 1098–1278 (ASCIVSGYGH…SWVKRDTFCQ (181 aa)). Intrachain disulfides connect cysteine 1100–cysteine 1241 and cysteine 1122–cysteine 1277. Positions 1372–1425 (CPPNSHYESCVSVCQPRCAAIRLKSDCNHYCVEGCQCDAGYVLNGKSCILPHNC) constitute a TIL 3 domain. The VWFD 4 domain occupies 1485–1666 (SYCLAAGGGV…QKRPLAPSCN (182 aa)). 7 disulfides stabilise this stretch: cysteine 1487–cysteine 1622, cysteine 1509–cysteine 1665, cysteine 1717–cysteine 1775, cysteine 1741–cysteine 1784, cysteine 1786–cysteine 1818, cysteine 1806–cysteine 1898, and cysteine 1837–cysteine 1857. 10 N-linked (GlcNAc...) asparagine glycosylation sites follow: asparagine 1538, asparagine 1565, asparagine 1756, asparagine 1772, asparagine 1794, asparagine 1851, asparagine 1864, asparagine 1880, asparagine 1920, and asparagine 1939. Positions 1805-2059 (TCKAAQMEVS…YSCKINCPQN (255 aa)) constitute a ZP domain. 3 disulfide bridges follow: cysteine 1980–cysteine 2040, cysteine 2001–cysteine 2056, and cysteine 2045–cysteine 2052. Asparagine 2091 carries GPI-anchor amidated asparagine lipidation. Residues 2092-2155 (GGCEQICTSR…HLIYKSGATS (64 aa)) constitute a propeptide, removed in mature form.

May form homomeric filament after self-association or heteromeric filament after association with beta-tectorin. Interacts with CEACAM16. 3 products of tectorin seem to exist: HMM, MMM and LMM. They may be generated by active processing or the result of proteolysis occurring between intrachain disulfide bonds. Post-translationally, the presence of a hydrophobic C-terminus preceded by a potential cleavage site strongly suggests that tectorins are synthesized as glycosylphosphatidylinositol-linked, membrane-bound precursors. Tectorins are targeted to the apical surface of the inner ear epithelia by the lipid and proteolytically released into the extracellular compartment. In terms of tissue distribution, cochlea-specific.

The protein localises to the cell membrane. Its subcellular location is the secreted. The protein resides in the extracellular space. It localises to the extracellular matrix. Its function is as follows. One of the major non-collagenous components of the tectorial membrane. The tectorial membrane is an extracellular matrix of the inner ear that covers the neuroepithelium of the cochlea and contacts the stereocilia bundles of specialized sensory hair cells. Sound induces movement of these hair cells relative to the tectorial membrane, deflects the stereocilia and leads to fluctuations in hair-cell membrane potential, transducing sound into electrical signals. This is Alpha-tectorin (Tecta) from Mus musculus (Mouse).